The chain runs to 119 residues: Beta-2-microglobulin (119 aa).

An N-terminal signal peptide occupies residues 1–20 (MARFVVVALLVLLSVSDLEA). Residues 25–114 (PKIQVYSRYP…VTFLTPKTVK (90 aa)) enclose the Ig-like C1-type domain. Cys-45 and Cys-100 form a disulfide bridge.

Belongs to the beta-2-microglobulin family. As to quaternary structure, heterodimer of an alpha chain and a beta chain. Beta-2-microglobulin is the beta-chain of major histocompatibility complex class I molecules.

It localises to the secreted. Its function is as follows. Component of the class I major histocompatibility complex (MHC). Involved in the presentation of peptide antigens to the immune system. This chain is Beta-2-microglobulin (B2M), found in Leontocebus fuscicollis (Brown-mantled tamarin).